The primary structure comprises 270 residues: Phosphatidylglycerol--prolipoprotein diacylglyceryl transferase (270 aa).

4 helical membrane-spanning segments follow: residues 18-38, 55-75, 90-110, and 115-135; these read ITIY…LWLA, LVLF…VLFE, WQGG…GAVF, and GLSF…GQAI. A 1,2-diacyl-sn-glycero-3-phospho-(1'-sn-glycerol) is bound at residue R137. The next 3 membrane-spanning stretches (helical) occupy residues 177–197, 205–225, and 236–256; these read HPTF…LLWL, GELF…IEGM, and LRAA…LWIV.

The protein belongs to the Lgt family.

The protein resides in the cell membrane. It catalyses the reaction L-cysteinyl-[prolipoprotein] + a 1,2-diacyl-sn-glycero-3-phospho-(1'-sn-glycerol) = an S-1,2-diacyl-sn-glyceryl-L-cysteinyl-[prolipoprotein] + sn-glycerol 1-phosphate + H(+). Its pathway is protein modification; lipoprotein biosynthesis (diacylglyceryl transfer). Functionally, catalyzes the transfer of the diacylglyceryl group from phosphatidylglycerol to the sulfhydryl group of the N-terminal cysteine of a prolipoprotein, the first step in the formation of mature lipoproteins. This Geobacillus kaustophilus (strain HTA426) protein is Phosphatidylglycerol--prolipoprotein diacylglyceryl transferase.